Reading from the N-terminus, the 408-residue chain is Homogentisate geranylgeranyltransferase (408 aa).

The N-terminal 68 residues, 1–68 (MQATTAAAAA…SAISQATSPR (68 aa)), are a transit peptide targeting the chloroplast. A run of 9 helical transmembrane segments spans residues 122-142 (HTIF…MKSI), 149-169 (VLKG…YVVG), 194-214 (SVAT…SIGI), 217-237 (GSVP…AYSI), 248-268 (ALLA…LAFF), 286-306 (LVFA…FKDI), 329-349 (VYQL…VVGA), 352-372 (THLL…LTLW), and 386-406 (VTSF…LIPF).

This sequence belongs to the UbiA prenyltransferase family.

The protein localises to the plastid. The protein resides in the chloroplast membrane. It catalyses the reaction homogentisate + (2E,6E,10E)-geranylgeranyl diphosphate + H(+) = 6-geranylgeranyl-2-methylbenzene-1,4-diol + CO2 + diphosphate. It functions in the pathway cofactor biosynthesis; tocopherol biosynthesis. In terms of biological role, involved in the synthesis of tocotrienol (vitamin E). Catalyzes the condensation of homogentisate and geranylgeranyl diphosphate to form 2-methyl-6-geranylgeranylbenzoquinol. Possesses low activity with phytyl diphosphate as substrate. In Triticum aestivum (Wheat), this protein is Homogentisate geranylgeranyltransferase.